The primary structure comprises 147 residues: D-aminoacyl-tRNA deacylase (147 aa).

The Gly-cisPro motif, important for rejection of L-amino acids signature appears at 136-137 (GP).

This sequence belongs to the DTD family. Homodimer.

Its subcellular location is the cytoplasm. It catalyses the reaction glycyl-tRNA(Ala) + H2O = tRNA(Ala) + glycine + H(+). It carries out the reaction a D-aminoacyl-tRNA + H2O = a tRNA + a D-alpha-amino acid + H(+). Functionally, an aminoacyl-tRNA editing enzyme that deacylates mischarged D-aminoacyl-tRNAs. Also deacylates mischarged glycyl-tRNA(Ala), protecting cells against glycine mischarging by AlaRS. Acts via tRNA-based rather than protein-based catalysis; rejects L-amino acids rather than detecting D-amino acids in the active site. By recycling D-aminoacyl-tRNA to D-amino acids and free tRNA molecules, this enzyme counteracts the toxicity associated with the formation of D-aminoacyl-tRNA entities in vivo and helps enforce protein L-homochirality. The sequence is that of D-aminoacyl-tRNA deacylase from Streptococcus pyogenes serotype M6 (strain ATCC BAA-946 / MGAS10394).